A 265-amino-acid chain; its full sequence is MIKLQKLKLYGFNNLTKSLSFCIYDICYANTNDSRNSYISYIDEQYNAIRLTKILKKTCSIIGANVLNIFHQDYEPQGASVTILVCEEPMSMEKIDALNKNIVSSSVLAHLDKSHICVHTYPESHPQSGICTFRADIEVSTCGIISPLNALNYLIHQLESDIVTIEYRVRGFTRDIHGIKHFIDHKINSIQNFMSDDIKSMYDMVDVNVYQENIFHTRMLLREFNLKNYLFNINLENLEKEERSYIKKLLSKEMREIYYGRNISR.

The active-site Schiff-base intermediate with substrate; via pyruvic acid is the S114. Pyruvic acid (Ser); by autocatalysis is present on S114. The active-site Proton acceptor; for processing activity is the H119. The active-site Proton donor; for catalytic activity is C142.

Belongs to the prokaryotic AdoMetDC family. Type 2 subfamily. In terms of assembly, heterooctamer of four alpha and four beta chains arranged as a tetramer of alpha/beta heterodimers. Requires pyruvate as cofactor. In terms of processing, is synthesized initially as an inactive proenzyme. Formation of the active enzyme involves a self-maturation process in which the active site pyruvoyl group is generated from an internal serine residue via an autocatalytic post-translational modification. Two non-identical subunits are generated from the proenzyme in this reaction, and the pyruvate is formed at the N-terminus of the alpha chain, which is derived from the carboxyl end of the proenzyme. The post-translation cleavage follows an unusual pathway, termed non-hydrolytic serinolysis, in which the side chain hydroxyl group of the serine supplies its oxygen atom to form the C-terminus of the beta chain, while the remainder of the serine residue undergoes an oxidative deamination to produce ammonia and the pyruvoyl group blocking the N-terminus of the alpha chain.

It carries out the reaction S-adenosyl-L-methionine + H(+) = S-adenosyl 3-(methylsulfanyl)propylamine + CO2. It functions in the pathway amine and polyamine biosynthesis; S-adenosylmethioninamine biosynthesis; S-adenosylmethioninamine from S-adenosyl-L-methionine: step 1/1. Catalyzes the decarboxylation of S-adenosylmethionine to S-adenosylmethioninamine (dcAdoMet), the propylamine donor required for the synthesis of the polyamines spermine and spermidine from the diamine putrescine. This chain is S-adenosylmethionine decarboxylase proenzyme, found in Buchnera aphidicola subsp. Acyrthosiphon pisum (strain APS) (Acyrthosiphon pisum symbiotic bacterium).